The primary structure comprises 361 residues: tRNA-specific 2-thiouridylase MnmA (361 aa).

ATP is bound by residues 9–16 (GMSGGVDS) and Met-35. The segment at 95 to 97 (NPD) is interaction with target base in tRNA. Catalysis depends on Cys-100, which acts as the Nucleophile. Cysteines 100 and 196 form a disulfide. Residue Gly-124 participates in ATP binding. The interaction with tRNA stretch occupies residues 146 to 148 (KDQ). Cys-196 acts as the Cysteine persulfide intermediate in catalysis. Residues 308–309 (RY) form an interaction with tRNA region.

The protein belongs to the MnmA/TRMU family.

Its subcellular location is the cytoplasm. The catalysed reaction is S-sulfanyl-L-cysteinyl-[protein] + uridine(34) in tRNA + AH2 + ATP = 2-thiouridine(34) in tRNA + L-cysteinyl-[protein] + A + AMP + diphosphate + H(+). Functionally, catalyzes the 2-thiolation of uridine at the wobble position (U34) of tRNA, leading to the formation of s(2)U34. This is tRNA-specific 2-thiouridylase MnmA from Nitrosomonas eutropha (strain DSM 101675 / C91 / Nm57).